The following is a 332-amino-acid chain: Large ribosomal subunit protein uL29m (332 aa).

The disordered stretch occupies residues 19-40 (RFTKPKPKPAKRENVRLPTQRT). Residues 264–327 (TSENTESAIA…IQLQEEDAKN (64 aa)) adopt a coiled-coil conformation.

It belongs to the universal ribosomal protein uL29 family. In terms of assembly, component of the mitochondrial large ribosomal subunit. Mature mitochondrial ribosomes consist of a small (37S) and a large (54S) subunit. The 37S subunit contains at least 33 different proteins and 1 molecule of RNA (15S). The 54S subunit contains at least 45 different proteins and 1 molecule of RNA (21S).

It localises to the mitochondrion. This is Large ribosomal subunit protein uL29m (MRPL4) from Kluyveromyces lactis (strain ATCC 8585 / CBS 2359 / DSM 70799 / NBRC 1267 / NRRL Y-1140 / WM37) (Yeast).